The primary structure comprises 20 residues: Beta-1,3-glucan-binding protein 2 (20 aa).

Belongs to the insect beta-1,3-glucan binding protein family. In terms of assembly, monomer.

The protein localises to the secreted. Functionally, involved in the recognition of invading microorganisms causing their aggregation. Activates the phenoloxidase cascade. Binds specifically to beta-1,3-glucan. Binds the A.niger cell wall component alpha-1,3-glucan, a fungal pathogen-associated molecular pattern (PAMP) that activates the host immune response. This Galleria mellonella (Greater wax moth) protein is Beta-1,3-glucan-binding protein 2.